The sequence spans 497 residues: Probable cytosol aminopeptidase (497 aa).

Mn(2+) is bound by residues K267 and D272. The active site involves K279. Positions 290, 349, and 351 each coordinate Mn(2+). Residue R353 is part of the active site.

The protein belongs to the peptidase M17 family. Mn(2+) serves as cofactor.

The protein resides in the cytoplasm. It catalyses the reaction Release of an N-terminal amino acid, Xaa-|-Yaa-, in which Xaa is preferably Leu, but may be other amino acids including Pro although not Arg or Lys, and Yaa may be Pro. Amino acid amides and methyl esters are also readily hydrolyzed, but rates on arylamides are exceedingly low.. It carries out the reaction Release of an N-terminal amino acid, preferentially leucine, but not glutamic or aspartic acids.. In terms of biological role, presumably involved in the processing and regular turnover of intracellular proteins. Catalyzes the removal of unsubstituted N-terminal amino acids from various peptides. The sequence is that of Probable cytosol aminopeptidase from Pseudomonas putida (strain W619).